The sequence spans 1063 residues: JmjC domain-containing histone demethylation protein 1 (1063 aa).

Positions 86 to 266 (LYNVLSLEYS…TQLRVYQVEN (181 aa)) constitute a JmjC domain. Residue Thr160 participates in substrate binding. Fe cation is bound by residues His163 and Asp165. Lys180 contributes to the substrate binding site. Fe cation is bound at residue His234. Residues 379 to 389 (GLEEEAEDEDV) show a composition bias toward acidic residues. Disordered regions lie at residues 379 to 400 (GLEE…AEER), 554 to 750 (ESDE…NPYN), and 776 to 1040 (VELH…KRAK). Residues 390–400 (KPETKKEAEER) show a composition bias toward basic and acidic residues. Acidic residues-rich tracts occupy residues 594–605 (PEYDEDMEEYDP) and 613–631 (ELEE…EEEY). Positions 636–646 (TRRSSTRGSAS) are enriched in low complexity. Basic and acidic residues-rich tracts occupy residues 647-665 (TKEE…PKKE), 674-712 (EKSS…ELRA), 776-806 (VELH…HEDS), 813-835 (PYDR…DSHR), and 892-902 (EPRRSNDRRTS). Over residues 926 to 937 (AEAASASSSRHS) the composition is skewed to low complexity. Polar residues-rich tracts occupy residues 950 to 963 (LNSS…TPMY) and 973 to 982 (WLPNTSNVTR). Over residues 1005–1016 (PPFPRSITPPPV) the composition is skewed to pro residues. A compositionally biased stretch (polar residues) spans 1020 to 1030 (ELKSQSNGRKS). A compositionally biased stretch (basic and acidic residues) spans 1031-1040 (NYSEDGKRAK).

Belongs to the JHDM1 histone demethylase family. Fe(2+) is required as a cofactor.

Its subcellular location is the nucleus. The enzyme catalyses N(6),N(6)-dimethyl-L-lysyl(36)-[histone H3] + 2 2-oxoglutarate + 2 O2 = L-lysyl(36)-[histone H3] + 2 formaldehyde + 2 succinate + 2 CO2. In terms of biological role, histone demethylase that specifically demethylates 'Lys-36' of histone H3, thereby playing a central role in histone code. This Caenorhabditis briggsae protein is JmjC domain-containing histone demethylation protein 1 (jhdm-1).